The following is a 111-amino-acid chain: uncharacterized protein (111 aa).

Gly-2 carries the N-myristoyl glycine; by host lipid modification.

This is an uncharacterized protein from Acanthamoeba polyphaga mimivirus (APMV).